Here is a 1007-residue protein sequence, read N- to C-terminus: Lysosomal alpha-mannosidase (1007 aa).

Composition is skewed to low complexity over residues 1–10 and 19–28; these read MGADARPLGV and AARPGTSSRA. The interval 1–30 is disordered; that stretch reads MGADARPLGVRAGGGGRGAARPGTSSRALP. A signal peptide spans 1 to 50; it reads MGADARPLGVRAGGGGRGAARPGTSSRALPPPLPPLSFLLLLLAAPGARA. Intrachain disulfides connect C56–C360 and C269–C274. Zn(2+) is bound by residues H73 and D75. N-linked (GlcNAc...) asparagine glycosylation occurs at N134. Zn(2+) is bound at residue D197. The active-site Nucleophile is D197. Residues N311, N347, and N369 are each glycosylated (N-linked (GlcNAc...) asparagine). 2 disulfides stabilise this stretch: C414/C474 and C495/C503. H448 is a Zn(2+) binding site. N-linked (GlcNAc...) asparagine glycosylation is found at N499, N543, N643, N649, N690, N764, and N927.

The protein belongs to the glycosyl hydrolase 38 family. Requires Zn(2+) as cofactor. Processed into 3 peptides of 72 kDa, 41 kDa and 12 kDa.

It is found in the lysosome. It carries out the reaction Hydrolysis of terminal, non-reducing alpha-D-mannose residues in alpha-D-mannosides.. In terms of biological role, necessary for the catabolism of N-linked carbohydrates released during glycoprotein turnover. This chain is Lysosomal alpha-mannosidase (MAN2B1), found in Felis catus (Cat).